A 65-amino-acid polypeptide reads, in one-letter code: Hainantoxin-X (65 aa).

An N-terminal signal peptide occupies residues methionine 1–alanine 20. A propeptide spanning residues glutamate 21–arginine 37 is cleaved from the precursor. Cystine bridges form between cysteine 39/cysteine 56, cysteine 46/cysteine 59, and cysteine 55/cysteine 64.

This sequence belongs to the neurotoxin 36 family. 02 subfamily. As to expression, expressed by the venom gland.

The protein localises to the secreted. Functionally, reversibly blocks N-type calcium channels (Cav2.2/CACNA1B) in rat dorsal root ganglion cells. Elicits no toxic symptoms in either vertebrates or invertebrates during a period of 48 hours post-injection, when it was assayed in vivo by direct injection into mice and cockroaches. The polypeptide is Hainantoxin-X (Cyriopagopus hainanus (Chinese bird spider)).